A 305-amino-acid polypeptide reads, in one-letter code: Suppressor of activated egl-4 protein 2 (305 aa).

The disordered stretch occupies residues 138–168; the sequence is KRGYESDSSDVSGVSHCSDAKRRRGRPRKDE. Positions 158–170 form a DNA-binding region, a.T hook; it reads KRRRGRPRKDEEA.

Interacts with phosphorylated egl-4. May interact with itself. May be a component of a histone deacetylase complex containing saeg-2, saeg-1 and hda-2. In terms of tissue distribution, ubiquitously expressed.

Its subcellular location is the nucleus. In terms of biological role, as a likely component of a histone deacetylase complex, together with saeg-1 and hda-2, functions downstream of the cAMP-dependent kinase egl-4 to regulate the expression of genes required for egg-laying and foraging. This Caenorhabditis elegans protein is Suppressor of activated egl-4 protein 2.